Consider the following 626-residue polypeptide: tRNA uridine 5-carboxymethylaminomethyl modification enzyme MnmG (626 aa).

Residue 13-18 (GGGHAG) participates in FAD binding. Residue 273 to 287 (GPRYCPSIEDKIHRF) coordinates NAD(+).

The protein belongs to the MnmG family. As to quaternary structure, homodimer. Heterotetramer of two MnmE and two MnmG subunits. It depends on FAD as a cofactor.

It localises to the cytoplasm. Functionally, NAD-binding protein involved in the addition of a carboxymethylaminomethyl (cmnm) group at the wobble position (U34) of certain tRNAs, forming tRNA-cmnm(5)s(2)U34. The protein is tRNA uridine 5-carboxymethylaminomethyl modification enzyme MnmG of Acinetobacter baumannii (strain ACICU).